The sequence spans 345 residues: Dihydroorotate dehydrogenase (quinone) (345 aa).

Residues 65-69 (AGLDK) and threonine 89 contribute to the FMN site. Lysine 69 lines the substrate pocket. 114–118 (NRMGF) provides a ligand contact to substrate. The FMN site is built by asparagine 142 and asparagine 175. Asparagine 175 contacts substrate. Serine 178 acts as the Nucleophile in catalysis. Asparagine 180 serves as a coordination point for substrate. The FMN site is built by lysine 220 and threonine 248. 249 to 250 (NT) is a binding site for substrate. Residues glycine 271, glycine 300, and 321–322 (YT) each bind FMN.

This sequence belongs to the dihydroorotate dehydrogenase family. Type 2 subfamily. Monomer. Requires FMN as cofactor.

The protein resides in the cell membrane. It catalyses the reaction (S)-dihydroorotate + a quinone = orotate + a quinol. It functions in the pathway pyrimidine metabolism; UMP biosynthesis via de novo pathway; orotate from (S)-dihydroorotate (quinone route): step 1/1. In terms of biological role, catalyzes the conversion of dihydroorotate to orotate with quinone as electron acceptor. This is Dihydroorotate dehydrogenase (quinone) from Burkholderia multivorans (strain ATCC 17616 / 249).